The sequence spans 113 residues: Hydrogenase maturation factor HybF (113 aa).

Residues histidine 2 and glutamate 3 each coordinate Ni(2+). Residues cysteine 73, cysteine 76, cysteine 89, and cysteine 92 each coordinate Zn(2+).

Belongs to the HypA/HybF family. HybF subfamily.

In terms of biological role, involved in the maturation of [NiFe] hydrogenases. Required for nickel insertion into the metal center of the hydrogenase. The sequence is that of Hydrogenase maturation factor HybF from Proteus vulgaris.